A 222-amino-acid polypeptide reads, in one-letter code: NADH dehydrogenase [ubiquinone] iron-sulfur protein 8-B, mitochondrial (222 aa).

2 consecutive 4Fe-4S ferredoxin-type domains span residues 114 to 143 (RRYP…IEAE) and 153 to 182 (TRYD…EGPN). C123, C126, C129, C133, C162, C165, C168, and C172 together coordinate [4Fe-4S] cluster.

The protein belongs to the complex I 23 kDa subunit family. In terms of assembly, complex I is composed of at least 49 different subunits. This is a component of the iron-sulfur (IP) fragment of the enzyme. It depends on [4Fe-4S] cluster as a cofactor.

The protein resides in the mitochondrion. It carries out the reaction a ubiquinone + NADH + 5 H(+)(in) = a ubiquinol + NAD(+) + 4 H(+)(out). In terms of biological role, core subunit of the mitochondrial membrane respiratory chain NADH dehydrogenase (Complex I) that is believed to belong to the minimal assembly required for catalysis. Complex I functions in the transfer of electrons from NADH to the respiratory chain. The immediate electron acceptor for the enzyme is believed to be ubiquinone. May donate electrons to ubiquinone. The chain is NADH dehydrogenase [ubiquinone] iron-sulfur protein 8-B, mitochondrial from Arabidopsis thaliana (Mouse-ear cress).